Consider the following 173-residue polypeptide: Acireductone dioxygenase 1 (173 aa).

Positions 96, 98, 102, and 140 each coordinate Fe(2+). Ni(2+) contacts are provided by histidine 96, histidine 98, glutamate 102, and histidine 140.

Belongs to the acireductone dioxygenase (ARD) family. As to quaternary structure, monomer. It depends on Fe(2+) as a cofactor. Requires Ni(2+) as cofactor.

The enzyme catalyses 1,2-dihydroxy-5-(methylsulfanyl)pent-1-en-3-one + O2 = 3-(methylsulfanyl)propanoate + CO + formate + 2 H(+). The catalysed reaction is 1,2-dihydroxy-5-(methylsulfanyl)pent-1-en-3-one + O2 = 4-methylsulfanyl-2-oxobutanoate + formate + 2 H(+). Its pathway is amino-acid biosynthesis; L-methionine biosynthesis via salvage pathway; L-methionine from S-methyl-5-thio-alpha-D-ribose 1-phosphate: step 5/6. Its function is as follows. Catalyzes 2 different reactions between oxygen and the acireductone 1,2-dihydroxy-3-keto-5-methylthiopentene (DHK-MTPene) depending upon the metal bound in the active site. Fe-containing acireductone dioxygenase (Fe-ARD) produces formate and 2-keto-4-methylthiobutyrate (KMTB), the alpha-ketoacid precursor of methionine in the methionine recycle pathway. Ni-containing acireductone dioxygenase (Ni-ARD) produces methylthiopropionate, carbon monoxide and formate, and does not lie on the methionine recycle pathway. The sequence is that of Acireductone dioxygenase 1 from Pectobacterium atrosepticum (strain SCRI 1043 / ATCC BAA-672) (Erwinia carotovora subsp. atroseptica).